A 1912-amino-acid chain; its full sequence is Protein javelin (1912 aa).

Disordered stretches follow at residues 1–32 (MGNGYFRTSQTSSSSRQREKRGKDSYSYQHNY), 89–145 (GTGL…VGGA), 298–377 (RSRH…HRLS), 460–515 (QSRR…SLSE), 545–586 (TTRT…TLRQ), 764–920 (SYNQ…EAPV), 965–1010 (IQEN…GKPL), 1257–1297 (GINS…GGAA), 1486–1507 (EQQENGEHLEEEDDEQDDQYED), and 1881–1912 (YDPSKEPPPQVEEGTDKIPTDAELYDSLDDKM). Basic residues-rich tracts occupy residues 97 to 133 (QQLHHHHSNQVNQHHHQQQQSHHHLQHANLHSHHPHA) and 299 to 313 (SRHKFQFKQFKKKPP). The segment covering 339 to 354 (ADDTQSQRSNSATCDS) has biased composition (polar residues). Over residues 355 to 374 (HQQQQQQQHQPQQQHQQQQH) the composition is skewed to low complexity. Positions 489 to 498 (EHSQSSVFPE) are enriched in polar residues. The segment covering 499–512 (TTTSNSDDQTDSPS) has biased composition (low complexity). Positions 553 to 566 (SEEGEEEQTGEEVV) are enriched in acidic residues. Positions 568–586 (SLTTPTEPQTSDSESTLRQ) are enriched in polar residues. Composition is skewed to basic and acidic residues over residues 772–792 (QRKEAKKEQQVTRAETYDSIR) and 802–869 (RQRE…RKEE). Over residues 890–904 (SQQEDTVADVEEEDN) the composition is skewed to acidic residues. The segment covering 965–979 (IQENKETSQRIEPKP) has biased composition (basic and acidic residues). The span at 981–990 (PKTNSNSSST) shows a compositional bias: low complexity. Composition is skewed to acidic residues over residues 1494–1507 (LEEEDDEQDDQYED) and 1903–1912 (ELYDSLDDKM).

The protein localises to the cytoplasm. Its subcellular location is the cytoskeleton. Functionally, important for normal assembly of actin bundles during bristle formation. The protein is Protein javelin of Drosophila melanogaster (Fruit fly).